Consider the following 327-residue polypeptide: tRNA dimethylallyltransferase (327 aa).

ATP is bound at residue 14–21 (GPTASGKT). 16-21 (TASGKT) is a binding site for substrate. Interaction with substrate tRNA regions lie at residues 39–42 (DSAL) and 163–167 (QRIQR).

The protein belongs to the IPP transferase family. In terms of assembly, monomer. The cofactor is Mg(2+).

It catalyses the reaction adenosine(37) in tRNA + dimethylallyl diphosphate = N(6)-dimethylallyladenosine(37) in tRNA + diphosphate. Functionally, catalyzes the transfer of a dimethylallyl group onto the adenine at position 37 in tRNAs that read codons beginning with uridine, leading to the formation of N6-(dimethylallyl)adenosine (i(6)A). This chain is tRNA dimethylallyltransferase, found in Xanthomonas axonopodis pv. citri (strain 306).